The primary structure comprises 121 residues: Small ribosomal subunit protein uS13 (121 aa).

The interval 93-121 is disordered; that stretch reads RGLPMRGQRTRTNARTRKGPRKGAAALKK.

Belongs to the universal ribosomal protein uS13 family. As to quaternary structure, part of the 30S ribosomal subunit. Forms a loose heterodimer with protein S19. Forms two bridges to the 50S subunit in the 70S ribosome.

In terms of biological role, located at the top of the head of the 30S subunit, it contacts several helices of the 16S rRNA. In the 70S ribosome it contacts the 23S rRNA (bridge B1a) and protein L5 of the 50S subunit (bridge B1b), connecting the 2 subunits; these bridges are implicated in subunit movement. Contacts the tRNAs in the A and P-sites. This Acidovorax ebreus (strain TPSY) (Diaphorobacter sp. (strain TPSY)) protein is Small ribosomal subunit protein uS13.